Consider the following 113-residue polypeptide: Class I hydrophobin POH3 (113 aa).

The signal sequence occupies residues 1–21; sequence MFSRVIFCTFLILPLLAAATA. Intrachain disulfides connect Cys32/Cys92, Cys39/Cys86, Cys40/Cys73, and Cys93/Cys106. An N-linked (GlcNAc...) asparagine glycan is attached at Asn110.

Belongs to the fungal hydrophobin family. As to quaternary structure, self-assembles to form functional amyloid fibrils called rodlets. Self-assembly into fibrillar rodlets occurs spontaneously at hydrophobic:hydrophilic interfaces and the rodlets further associate laterally to form amphipathic monolayers. Expressionn is switched off in the fruiting bodies but abundantly expressed in the vegetative mycelium of both monokaryon and dikaryon.

It is found in the secreted. It localises to the cell wall. Its function is as follows. Aerial growth, conidiation, and dispersal of filamentous fungi in the environment rely upon a capability of their secreting small amphipathic proteins called hydrophobins (HPBs) with low sequence identity. Class I can self-assemble into an outermost layer of rodlet bundles on aerial cell surfaces, conferring cellular hydrophobicity that supports fungal growth, development and dispersal; whereas Class II form highly ordered films at water-air interfaces through intermolecular interactions but contribute nothing to the rodlet structure. POH3 is a class I hydrophobin that causes a large drop in the water-surface tension, enabling hyphae to breach the interface and grow into the air, in both the primary and the secondary mycelium. In the latter mycelium POH3 maight also play a role in the emergence of fruiting bodies. Secreted POH3 could also play a role in facilitating lignin degradation. The protein is Class I hydrophobin POH3 of Pleurotus ostreatus (Oyster mushroom).